Reading from the N-terminus, the 261-residue chain is Ribonuclease HII (261 aa).

Residues 71-259 (KYIAGVDEVG…VKEAKLHFDS (189 aa)) enclose the RNase H type-2 domain. Positions 77, 78, and 169 each coordinate a divalent metal cation.

It belongs to the RNase HII family. Mn(2+) is required as a cofactor. It depends on Mg(2+) as a cofactor.

The protein resides in the cytoplasm. The catalysed reaction is Endonucleolytic cleavage to 5'-phosphomonoester.. In terms of biological role, endonuclease that specifically degrades the RNA of RNA-DNA hybrids. This chain is Ribonuclease HII, found in Listeria monocytogenes serotype 4b (strain F2365).